A 92-amino-acid chain; its full sequence is Small ribosomal subunit protein bS18c (92 aa).

It belongs to the bacterial ribosomal protein bS18 family. As to quaternary structure, part of the 30S ribosomal subunit.

The protein resides in the plastid. The sequence is that of Small ribosomal subunit protein bS18c (rps18) from Epifagus virginiana (Beechdrops).